Reading from the N-terminus, the 359-residue chain is tRNA/tmRNA (uracil-C(5))-methyltransferase (359 aa).

Gln-183, Tyr-211, Asn-216, Glu-232, and Asp-292 together coordinate S-adenosyl-L-methionine. Cys-317 serves as the catalytic Nucleophile. The active-site Proton acceptor is Glu-351.

This sequence belongs to the class I-like SAM-binding methyltransferase superfamily. RNA M5U methyltransferase family. TrmA subfamily.

The catalysed reaction is uridine(54) in tRNA + S-adenosyl-L-methionine = 5-methyluridine(54) in tRNA + S-adenosyl-L-homocysteine + H(+). It carries out the reaction uridine(341) in tmRNA + S-adenosyl-L-methionine = 5-methyluridine(341) in tmRNA + S-adenosyl-L-homocysteine + H(+). In terms of biological role, dual-specificity methyltransferase that catalyzes the formation of 5-methyluridine at position 54 (m5U54) in all tRNAs, and that of position 341 (m5U341) in tmRNA (transfer-mRNA). The protein is tRNA/tmRNA (uracil-C(5))-methyltransferase of Pseudomonas fluorescens (strain ATCC BAA-477 / NRRL B-23932 / Pf-5).